The primary structure comprises 344 residues: Glycerol-3-phosphate dehydrogenase [NAD(P)+] 2 (344 aa).

Residues S12, W13, R33, R34, and K107 each coordinate NADPH. Sn-glycerol 3-phosphate contacts are provided by K107, G138, and S140. A142 lines the NADPH pocket. K193, D246, S256, R257, and N258 together coordinate sn-glycerol 3-phosphate. K193 serves as the catalytic Proton acceptor. R257 contributes to the NADPH binding site. Residues V281 and E283 each contribute to the NADPH site.

The protein belongs to the NAD-dependent glycerol-3-phosphate dehydrogenase family.

The protein resides in the cytoplasm. It carries out the reaction sn-glycerol 3-phosphate + NAD(+) = dihydroxyacetone phosphate + NADH + H(+). The enzyme catalyses sn-glycerol 3-phosphate + NADP(+) = dihydroxyacetone phosphate + NADPH + H(+). It participates in membrane lipid metabolism; glycerophospholipid metabolism. Its function is as follows. Catalyzes the reduction of the glycolytic intermediate dihydroxyacetone phosphate (DHAP) to sn-glycerol 3-phosphate (G3P), the key precursor for phospholipid synthesis. This Salinibacter ruber (strain DSM 13855 / M31) protein is Glycerol-3-phosphate dehydrogenase [NAD(P)+] 2.